The chain runs to 559 residues: Terpene synthase 1 (559 aa).

Residues D312, D316, D456, and E464 each contribute to the Mg(2+) site. The DDXXD motif motif lies at 312–316 (DDLYD).

The protein belongs to the terpene synthase family. Tpsa subfamily. Requires Mg(2+) as cofactor. It depends on Mn(2+) as a cofactor. Mostly expressed in stems and, to a lower extent, in leaves, roots and fruits.

It catalyses the reaction (2E,6E)-farnesyl diphosphate = (-)-(E)-beta-caryophyllene + diphosphate. It carries out the reaction (2E,6E)-farnesyl diphosphate = alpha-humulene + diphosphate. It functions in the pathway secondary metabolite biosynthesis; terpenoid biosynthesis. Sesquiterpene synthase involved in the biosynthesis of volatile compounds that contribute to the characteristic flavors of black pepper. Mediates the conversion of (2E,6E)-farnesyl diphosphate (FPP) into beta-caryophyllene and, as a minor compound, into alpha-humulene. This is Terpene synthase 1 from Piper nigrum (Black pepper).